A 123-amino-acid chain; its full sequence is Small ribosomal subunit protein uS12cz/uS12cy (123 aa).

Belongs to the universal ribosomal protein uS12 family. As to quaternary structure, part of the 30S ribosomal subunit.

The protein localises to the plastid. The protein resides in the chloroplast. In terms of biological role, with S4 and S5 plays an important role in translational accuracy. Located at the interface of the 30S and 50S subunits. This Platanus occidentalis (Sycamore) protein is Small ribosomal subunit protein uS12cz/uS12cy (rps12-A).